Here is a 410-residue protein sequence, read N- to C-terminus: Arginine deiminase (410 aa).

The active-site Amidino-cysteine intermediate is C400.

Belongs to the arginine deiminase family.

Its subcellular location is the cytoplasm. It catalyses the reaction L-arginine + H2O = L-citrulline + NH4(+). It functions in the pathway amino-acid degradation; L-arginine degradation via ADI pathway; carbamoyl phosphate from L-arginine: step 1/2. In Streptococcus uberis (strain ATCC BAA-854 / 0140J), this protein is Arginine deiminase.